Here is a 90-residue protein sequence, read N- to C-terminus: Darcynin 1 (90 aa).

It belongs to the darcynin family.

The sequence is that of Darcynin 1 from Acinetobacter baumannii (strain ATCC 17978 / DSM 105126 / CIP 53.77 / LMG 1025 / NCDC KC755 / 5377).